A 208-amino-acid polypeptide reads, in one-letter code: Uracil phosphoribosyltransferase (208 aa).

5-phospho-alpha-D-ribose 1-diphosphate-binding positions include Arg78, Arg103, and 130 to 138 (DPMLATGGS). Residues Ile193 and 198–200 (GDA) each bind uracil. 5-phospho-alpha-D-ribose 1-diphosphate is bound at residue Asp199.

This sequence belongs to the UPRTase family. Mg(2+) is required as a cofactor.

The enzyme catalyses UMP + diphosphate = 5-phospho-alpha-D-ribose 1-diphosphate + uracil. It participates in pyrimidine metabolism; UMP biosynthesis via salvage pathway; UMP from uracil: step 1/1. Allosterically activated by GTP. In terms of biological role, catalyzes the conversion of uracil and 5-phospho-alpha-D-ribose 1-diphosphate (PRPP) to UMP and diphosphate. This chain is Uracil phosphoribosyltransferase, found in Aeromonas salmonicida (strain A449).